The primary structure comprises 435 residues: Mitochondrial association factor 1 form b0 (435 aa).

The first 27 residues, 1–27 (MWRIWRCRLSFLFVTGCLLGALTAGLG), serve as a signal peptide directing secretion. Residues 28–96 (SQMSDSVGRN…VTARRRRNRR (69 aa)) are Vacuolar-facing. The disordered stretch occupies residues 43 to 89 (GVADASQEAGDVVEERTERTEEQVFAPGPPRRHSSESLFPRNPSVTA). Positions 55-64 (VEERTERTEE) are enriched in basic and acidic residues. The chain crosses the membrane as a helical span at residues 97–117 (ITLIATAVGVAVILAALYVLR). At 118 to 435 (RRRAQPPQEP…ESTYLASMLD (318 aa)) the chain is on the cytoplasmic side. Positions 120–162 (RAQPPQEPEPPTRLRTPRPRAPSGQQQPSESEPPAGVPMKPGS) are disordered.

The protein localises to the parasitophorous vacuole membrane. Its function is as follows. During host cell infection by tachyzoites, does not play a role in tethering the parasitophorous vacuole to the host mitochondria. The polypeptide is Mitochondrial association factor 1 form b0 (Toxoplasma gondii).